The following is a 319-amino-acid chain: Beta-ketoacyl-[acyl-carrier-protein] synthase III (319 aa).

Residues Cys-115 and His-246 contribute to the active site. An ACP-binding region spans residues 247 to 251; that stretch reads QANLR. Asn-276 is an active-site residue.

Belongs to the thiolase-like superfamily. FabH family. In terms of assembly, homodimer.

The protein resides in the cytoplasm. The enzyme catalyses malonyl-[ACP] + acetyl-CoA + H(+) = 3-oxobutanoyl-[ACP] + CO2 + CoA. Its pathway is lipid metabolism; fatty acid biosynthesis. Its function is as follows. Catalyzes the condensation reaction of fatty acid synthesis by the addition to an acyl acceptor of two carbons from malonyl-ACP. Catalyzes the first condensation reaction which initiates fatty acid synthesis and may therefore play a role in governing the total rate of fatty acid production. Possesses both acetoacetyl-ACP synthase and acetyl transacylase activities. Its substrate specificity determines the biosynthesis of branched-chain and/or straight-chain of fatty acids. This Coxiella burnetii (strain Dugway 5J108-111) protein is Beta-ketoacyl-[acyl-carrier-protein] synthase III.